The following is a 364-amino-acid chain: Sec-independent protein translocase protein TatC (364 aa).

Transmembrane regions (helical) follow at residues Ile-42–Phe-62, Met-107–Thr-127, Leu-139–Thr-159, Leu-160–Asp-180, Ile-194–Val-214, Pro-225–Thr-245, and Met-246–Leu-266. Residues Thr-277–Thr-364 form a disordered region. Acidic residues predominate over residues Asp-282–Asp-295. Over residues Ala-301 to Gly-320 the composition is skewed to low complexity. Polar residues predominate over residues Pro-324 to Pro-344.

This sequence belongs to the TatC family. The Tat system comprises two distinct complexes: a TatABC complex, containing multiple copies of TatA, TatB and TatC subunits, and a separate TatA complex, containing only TatA subunits. Substrates initially bind to the TatABC complex, which probably triggers association of the separate TatA complex to form the active translocon.

It is found in the cell membrane. Part of the twin-arginine translocation (Tat) system that transports large folded proteins containing a characteristic twin-arginine motif in their signal peptide across membranes. Together with TatB, TatC is part of a receptor directly interacting with Tat signal peptides. The chain is Sec-independent protein translocase protein TatC from Frankia casuarinae (strain DSM 45818 / CECT 9043 / HFP020203 / CcI3).